The following is a 310-amino-acid chain: Homoserine O-acetyltransferase (310 aa).

Cysteine 142 acts as the Acyl-thioester intermediate in catalysis. Positions 163 and 192 each coordinate substrate. The active-site Proton acceptor is the histidine 235. Residue glutamate 237 is part of the active site. Arginine 249 serves as a coordination point for substrate.

This sequence belongs to the MetA family.

The protein resides in the cytoplasm. It catalyses the reaction L-homoserine + acetyl-CoA = O-acetyl-L-homoserine + CoA. It participates in amino-acid biosynthesis; L-methionine biosynthesis via de novo pathway; O-acetyl-L-homoserine from L-homoserine: step 1/1. Its function is as follows. Transfers an acetyl group from acetyl-CoA to L-homoserine, forming acetyl-L-homoserine. The chain is Homoserine O-acetyltransferase from Parabacteroides distasonis (strain ATCC 8503 / DSM 20701 / CIP 104284 / JCM 5825 / NCTC 11152).